A 378-amino-acid chain; its full sequence is Histidinol-phosphate aminotransferase 2 (378 aa).

Lysine 240 carries the N6-(pyridoxal phosphate)lysine modification.

The protein belongs to the class-II pyridoxal-phosphate-dependent aminotransferase family. Histidinol-phosphate aminotransferase subfamily. As to quaternary structure, homodimer. Pyridoxal 5'-phosphate is required as a cofactor.

It carries out the reaction L-histidinol phosphate + 2-oxoglutarate = 3-(imidazol-4-yl)-2-oxopropyl phosphate + L-glutamate. The protein operates within amino-acid biosynthesis; L-histidine biosynthesis; L-histidine from 5-phospho-alpha-D-ribose 1-diphosphate: step 7/9. The protein is Histidinol-phosphate aminotransferase 2 (hisC2) of Caulobacter vibrioides (strain ATCC 19089 / CIP 103742 / CB 15) (Caulobacter crescentus).